Reading from the N-terminus, the 127-residue chain is Glycine cleavage system H protein (127 aa).

Residues Gln-22–Glu-104 form the Lipoyl-binding domain. The residue at position 63 (Lys-63) is an N6-lipoyllysine.

Belongs to the GcvH family. The glycine cleavage system is composed of four proteins: P, T, L and H. (R)-lipoate is required as a cofactor.

Functionally, the glycine cleavage system catalyzes the degradation of glycine. The H protein shuttles the methylamine group of glycine from the P protein to the T protein. Is also involved in protein lipoylation via its role as an octanoyl/lipoyl carrier protein intermediate. This chain is Glycine cleavage system H protein, found in Bacillus cytotoxicus (strain DSM 22905 / CIP 110041 / 391-98 / NVH 391-98).